The primary structure comprises 357 residues: Elongation factor Ts (357 aa).

An involved in Mg(2+) ion dislocation from EF-Tu region spans residues 82–85; the sequence is TDFV.

This sequence belongs to the EF-Ts family.

The protein resides in the cytoplasm. In terms of biological role, associates with the EF-Tu.GDP complex and induces the exchange of GDP to GTP. It remains bound to the aminoacyl-tRNA.EF-Tu.GTP complex up to the GTP hydrolysis stage on the ribosome. The polypeptide is Elongation factor Ts (Campylobacter jejuni subsp. jejuni serotype O:2 (strain ATCC 700819 / NCTC 11168)).